Reading from the N-terminus, the 139-residue chain is uncharacterized protein (139 aa).

The VOC domain occupies 9-133; the sequence is QAAQIRIARP…DGWRIVFMNS (125 aa).

This is an uncharacterized protein from Bacillus subtilis (strain 168).